The chain runs to 497 residues: MQERRVDVVLVGGGIMSATLGVLLKELEPSWSMMLLERLEGVALESTGAWNNAGTGHQALCELNYTPMRSNGEIDIQKAIKINESFEISKQFWAYHVQKKHLKEPESFIHPVPHMSFVRGKDVAYLQARHKALSLHPLFCGMKYSESMDEIERWVPLIAEGRKREERVAATCIDWGTDVNFGSLTEQFSDYLAKQEGFVLKTHHEVVDIKRSQEGHWRVKSLDKKSGEFTEVEARFVFIGAGGAALPLLYKSGIPEARGYGGFPVSGQWLVCSNPEPIEIHRAKVYGKAAVGAPPMSVPHLDTRVIDGEKKLLFGPFAGFSTNFLKQGSYLDFFLSFNSGNFKTMIEAGLDNIPLTQYLINQVMLSLKGRIEVLKEYMPKAEFGDWELKIAGQRVQIIKPDAKNRGSLQFGTEVVASNDGSLAALLGASPGASTAVEAMLGVLEKCFKKELETPLWKEKLQEMIPSYGHPLSDDLGRLNENRRYTSGLLHLPFTPVQ.

Belongs to the MQO family. The cofactor is FAD.

The catalysed reaction is (S)-malate + a quinone = a quinol + oxaloacetate. Its pathway is carbohydrate metabolism; tricarboxylic acid cycle; oxaloacetate from (S)-malate (quinone route): step 1/1. This chain is Probable malate:quinone oxidoreductase, found in Wolinella succinogenes (strain ATCC 29543 / DSM 1740 / CCUG 13145 / JCM 31913 / LMG 7466 / NCTC 11488 / FDC 602W) (Vibrio succinogenes).